The primary structure comprises 864 residues: MPSTALSPPSRPPAQSYDSYSSSLSPSSPRFHAAAGSHGRRSPSPSRLESLLDGPHVPPRSPSRKIRSALSRHIRPHITPRTLTPVFLWTLALWLIHHFLFPLSSPFAKLAKPKAEEHFLSTTFPPPAQRLGDDRLDSVDPRWRAYHPLPAPEPPFPRLRPTRFLPPQCLEQWFAEGETLCGAKEMGEEETLDATWLWVNGSDHRWRDSMVEWREKENVNSPERHYREQNELVHSMRSVLDALPGHLRTFHLILADYPFNYPEDLELVPSSIIPDLEVAASKSKGRRHPRELPGAPASLANLTERVTPESISPTLASHLQSEWRILQTPTWLDFSRRDPSDPSHPFHPYSVSKAGEIRQHYAEASYPTLRYASHWEVFHIPSVDRDGRQELMGEREWRENEWKKKALPSFNSMAIESRIGWLPGLADAIIALNDDFFLLRPHAVSDFHSPLYGSVIRFEHGYNQQVKPDVEKNHINDPGEMGGLYHANALLSRRFPRRLRPYFAHVPKVITRGLHHEASLMFQEALTESSTRRFREMKIGEGDVQMQWLLTSLRVERWREALLWTWTVANMGTLGGSQDHWDNDTRRAIKNLFGFTENDDDVVKIEVHRGERWTLEPGRMQRVFRQAGWEAPKATEFLFSSMDGIMPPLLRSGEDPAQNDRCIIDLNRCFGLFWTREEDVLSSDMMKRLTFQYPECGDCMIMALVTASGTLGLNAFFPPKETTITAPELGPGDAYPKFLPPPHLPLTPTWHEADFSLANILSTTALPGEQVDIRQYCMRLLSRYLYLDAKSVSHFHMMKSAEHARRVFRMIQGDPKVSILGMNDDIESDYDEVRGLMNEWFEMRWPRKAVWERDWDPVKDRYND.

Residues 1-66 are disordered; the sequence is MPSTALSPPS…VPPRSPSRKI (66 aa). The Cytoplasmic segment spans residues 1–82; sequence MPSTALSPPS…HIRPHITPRT (82 aa). 2 stretches are compositionally biased toward low complexity: residues 16–29 and 42–52; these read SYDS…PSSP and SPSPSRLESLL. A helical transmembrane segment spans residues 83–103; sequence LTPVFLWTLALWLIHHFLFPL. Topologically, residues 104 to 864 are lumenal; the sequence is SSPFAKLAKP…WDPVKDRYND (761 aa). N-linked (GlcNAc...) asparagine glycosylation is found at asparagine 200, asparagine 301, and asparagine 583.

It belongs to the XPT1 family. It depends on Mn(2+) as a cofactor.

The protein resides in the golgi apparatus membrane. The enzyme catalyses 3-alpha-D-mannopyranosyl-alpha-D-mannopyranose + UDP-alpha-D-xylose = 3-O-(6-O-alpha-D-xylosylphospho-alpha-D-mannopyranosyl)-alpha-D-mannopyranose + UMP + H(+). In terms of biological role, xylosylphosphotransferase that is specific for UDP-xylose as a donor and mannose as an acceptor to form a xylose-alpha-1-phosphate-6-mannose linkage. Functions in the O-glycosylation of proteins en route through the secretory pathway. The chain is 3-O-alpha-D-mannopyranosyl-alpha-D-mannopyranose xylosylphosphotransferase (XPT1) from Cryptococcus neoformans var. grubii (Filobasidiella neoformans var. grubii).